The following is a 223-amino-acid chain: MNIAKLIDHTILKANSTKEDVMKVIEEAKEYKFASVCINPTWVKLAADELAGHDVDVCTVIGFPLGASTTETKAFETKDAIAKGATEVDMVINVGALKDGDNELVEKDIYEVVQAAKGKALVKVIIETCLLTDEEKVRACELSVKAGADFVKTSTGFSTGGATAEDIALMRKTVGPNVGVKASGGVRTREDADKMVAAGASRVGASASVAIVLNDAKGATDNY.

D89 (proton donor/acceptor) is an active-site residue. K152 (schiff-base intermediate with acetaldehyde) is an active-site residue. The active-site Proton donor/acceptor is the K181.

Belongs to the DeoC/FbaB aldolase family. DeoC type 1 subfamily.

It is found in the cytoplasm. It catalyses the reaction 2-deoxy-D-ribose 5-phosphate = D-glyceraldehyde 3-phosphate + acetaldehyde. It participates in carbohydrate degradation; 2-deoxy-D-ribose 1-phosphate degradation; D-glyceraldehyde 3-phosphate and acetaldehyde from 2-deoxy-alpha-D-ribose 1-phosphate: step 2/2. Functionally, catalyzes a reversible aldol reaction between acetaldehyde and D-glyceraldehyde 3-phosphate to generate 2-deoxy-D-ribose 5-phosphate. This Bacillus cereus (strain B4264) protein is Deoxyribose-phosphate aldolase.